A 492-amino-acid polypeptide reads, in one-letter code: Trigger factor (492 aa).

Residues 77 to 96 (EILSSRGEKSATQPAISMTE) are disordered. The 86-residue stretch at 169 to 254 (GDRVTMNYLG…VKEVAAAAAV (86 aa)) folds into the PPIase FKBP-type domain. Residues 439–492 (ELLADDGEEETETKKKAPAKKKAAAKADDAAEGEEAAPKKKAPAKKKATEADAE) are disordered.

This sequence belongs to the FKBP-type PPIase family. Tig subfamily.

It localises to the cytoplasm. It carries out the reaction [protein]-peptidylproline (omega=180) = [protein]-peptidylproline (omega=0). In terms of biological role, involved in protein export. Acts as a chaperone by maintaining the newly synthesized protein in an open conformation. Functions as a peptidyl-prolyl cis-trans isomerase. The sequence is that of Trigger factor from Agrobacterium fabrum (strain C58 / ATCC 33970) (Agrobacterium tumefaciens (strain C58)).